A 740-amino-acid chain; its full sequence is Death domain-associated protein 6 (740 aa).

A disordered region spans residues 1 to 55 (MATANSIIVLDDDDEDEAAAQPGPSHPLPNAASPGAEAPSSSEPHGARGSSSSGG). The segment at 1–160 (MATANSIIVL…TSNEPSGNNP (160 aa)) is necessary for interaction with USP7 and ATRX. At Ser25 the chain carries Phosphoserine. Residues 29 to 55 (PNAASPGAEAPSSSEPHGARGSSSSGG) show a composition bias toward low complexity. Residue Lys142 forms a Glycyl lysine isopeptide (Lys-Gly) (interchain with G-Cter in SUMO2) linkage. The disordered stretch occupies residues 147-185 (PAATTSNEPSGNNPPTHLSLDPTNAENTASQSPRTRGSR). Over residues 149 to 181 (ATTSNEPSGNNPPTHLSLDPTNAENTASQSPRT) the composition is skewed to polar residues. Ser178 and Ser213 each carry phosphoserine. 2 coiled-coil regions span residues 180–217 (RTRGSRRQIQRLEQLLALYVAEIRRLQEKELDLSELDD) and 358–399 (ARRL…ARLQ). The tract at residues 183–417 (GSRRQIQRLE…TPEASLDSGE (235 aa)) is interaction with histone H3.3. The segment at 347–570 (GVDPALSDPV…SPVSQLFELE (224 aa)) is necessary for interaction with USP7. The segment at 384–724 (DKSEEGERKK…PRPGTCKTSV (341 aa)) is disordered. Positions 391–395 (RKKRR) match the Nuclear localization signal motif. Phosphoserine occurs at positions 412 and 424. Positions 430-489 (ASRAETDDEDDEESDEEEEEEEEEEEEEATDSEEEEDLEQMQEGQEDDEEEDEEEEAAAG) form a coiled coil. A compositionally biased stretch (acidic residues) spans 435 to 486 (TDDEDDEESDEEEEEEEEEEEEEATDSEEEEDLEQMQEGQEDDEEEDEEEEA). Thr459 carries the post-translational modification Phosphothreonine. Phosphoserine is present on residues Ser495 and Ser498. A compositionally biased stretch (polar residues) spans 496–505 (PMSSLQISNE). An interaction with MAP3K5 region spans residues 501–625 (QISNEKNLEP…GVSPHNWGDS (125 aa)). At Lys512 the chain carries N6-acetyllysine. Polar residues predominate over residues 514–524 (ISRSSGEQQNK). A compositionally biased stretch (low complexity) spans 529–542 (SPSLLSEEPLAPSS). Positions 551–561 (QPEELTLEEES) are enriched in acidic residues. Ser561 and Ser580 each carry phosphoserine. Residues 578–590 (TPSSVETDISSSR) show a composition bias toward polar residues. The interval 626–740 (GPPCKKSRKE…EEIIVLSDSD (115 aa)) is interaction with SPOP. 2 (Microbial infection) Interaction with Puumala hantavirus nucleoprotein regions span residues 627-634 (PPCKKSRK) and 658-663 (KNGKKI). The short motif at 628–634 (PCKKSRK) is the Nuclear localization signal element. Residues Lys630 and Lys631 each participate in a glycyl lysine isopeptide (Lys-Gly) (interchain with G-Cter in SUMO1) cross-link. Residues 650-660 (ERQRSVHEKNG) are compositionally biased toward basic and acidic residues. 2 positions are modified to phosphoserine: Ser668 and Ser671. Residues 673-683 (LASLAPVADSS) show a composition bias toward low complexity. Residues Ser688, Ser702, Ser737, and Ser739 each carry the phosphoserine modification. The span at 693–711 (LVTSSLCIPSPARLSQTPH) shows a compositional bias: polar residues. The interval 733 to 740 (IIVLSDSD) is sumo interaction motif (SIM).

It belongs to the DAXX family. In terms of assembly, homomultimer. Interacts (via C-terminus) with TNFRSF6 (via death domain). Interacts with PAX5, SLC2A4/GLUT4, MAP3K5, TGFBR2, phosphorylated dimeric HSPB1/HSP27, CENPC, ETS1, sumoylated PML, UBE2I, MCRS1 and TP53. Interacts (via N-terminus) with HIPK2 and HIPK3. Interacts with HIPK1, which induces translocation from PML/POD/ND10 nuclear bodies to chromatin and enhances association with HDAC1. Interacts (non-phosphorylated) with PAX3, PAX7, DEK, HDAC1, HDAC2, HDAC3, acetylated histone H4 and histones H2A, H2B, H3, H3.3 and H4. Interacts with SPOP; mediating CUL3-dependent proteasomal degradation. Interacts with CBP; the interaction is dependent the sumoylation of CBP and suppresses CBP transcriptional activity via recruitment of HDAC2 directly in the complex with TP53 and HIPK2. Interacts with AXIN1; the interaction stimulates the interaction of DAXX with TP53, stimulates 'Ser-46' phosphorylation of TP53 on and induces cell death on UV irradiation. Interacts with MDM2; the interaction is direct. Interacts with USP7; the interaction is direct and independent of MDM2 and TP53. Part of a complex with DAXX, MDM2 and USP7 under non-stress conditions. Interacts (via N-terminus) with RASSF1 (via C-terminus); the interaction is independent of MDM2 and TP53; RASSF1 isoform A disrupts interactions among MDM2, DAXX and USP7, thus contributing to the efficient activation of TP53 by promoting MDM2 self-ubiquitination in cell-cycle checkpoint control in response to DNA damage. Interacts with ATRX to form the chromatin remodeling complex ATRX:DAXX. Interacts with HSF1 (via homotrimeric form preferentially); this interaction relieves homotrimeric HSF1 from repression of its transcriptional activity by HSP90-dependent multichaperone complex upon heat shock. Interacts with SUMO1P1/SUMO5. As to quaternary structure, (Microbial infection) Interacts with human cytomegalovirus/HHV-5 tegument phosphoprotein pp71 and protein UL123. (Microbial infection) Interacts with Epstein-Barr virus protein BNRF1. In terms of assembly, (Microbial infection) Interacts with human adenovirus 5 E1B-55K protein; this interaction might alterate the normal interactions of DAXX, PML, and TP53, which may contribute to cell transformation. As to quaternary structure, (Microbial infection) Interacts with Puumala hantavirus nucleoprotein. In terms of processing, sumoylated with SUMO1 on multiple lysine residues. Phosphorylated by HIPK1 upon glucose deprivation. Post-translationally, polyubiquitinated; which is promoted by CUL3 and SPOP and results in proteasomal degradation. Ubiquitinated by MDM2; inducing its degradation. Deubiquitinated by USP7; leading to stabilize it. In terms of tissue distribution, ubiquitous.

The protein resides in the cytoplasm. The protein localises to the nucleus. Its subcellular location is the nucleoplasm. It is found in the PML body. It localises to the nucleolus. The protein resides in the chromosome. The protein localises to the centromere. Functionally, transcription corepressor known to repress transcriptional potential of several sumoylated transcription factors. Down-regulates basal and activated transcription. Its transcription repressor activity is modulated by recruiting it to subnuclear compartments like the nucleolus or PML/POD/ND10 nuclear bodies through interactions with MCSR1 and PML, respectively. Seems to regulate transcription in PML/POD/ND10 nuclear bodies together with PML and may influence TNFRSF6-dependent apoptosis thereby. Inhibits transcriptional activation of PAX3 and ETS1 through direct protein-protein interactions. Modulates PAX5 activity; the function seems to involve CREBBP. Acts as an adapter protein in a MDM2-DAXX-USP7 complex by regulating the RING-finger E3 ligase MDM2 ubiquitination activity. Under non-stress condition, in association with the deubiquitinating USP7, prevents MDM2 self-ubiquitination and enhances the intrinsic E3 ligase activity of MDM2 towards TP53, thereby promoting TP53 ubiquitination and subsequent proteasomal degradation. Upon DNA damage, its association with MDM2 and USP7 is disrupted, resulting in increased MDM2 autoubiquitination and consequently, MDM2 degradation, which leads to TP53 stabilization. Acts as a histone chaperone that facilitates deposition of histone H3.3. Acts as a targeting component of the chromatin remodeling complex ATRX:DAXX which has ATP-dependent DNA translocase activity and catalyzes the replication-independent deposition of histone H3.3 in pericentric DNA repeats outside S-phase and telomeres, and the in vitro remodeling of H3.3-containing nucleosomes. Does not affect the ATPase activity of ATRX but alleviates its transcription repression activity. Upon neuronal activation associates with regulatory elements of selected immediate early genes where it promotes deposition of histone H3.3 which may be linked to transcriptional induction of these genes. Required for the recruitment of histone H3.3:H4 dimers to PML-nuclear bodies (PML-NBs); the process is independent of ATRX and facilitated by ASF1A; PML-NBs are suggested to function as regulatory sites for the incorporation of newly synthesized histone H3.3 into chromatin. In case of overexpression of centromeric histone variant CENPA (as found in various tumors) is involved in its mislocalization to chromosomes; the ectopic localization involves a heterotypic tetramer containing CENPA, and histones H3.3 and H4 and decreases binding of CTCF to chromatin. Proposed to mediate activation of the JNK pathway and apoptosis via MAP3K5 in response to signaling from TNFRSF6 and TGFBR2. Interaction with HSPB1/HSP27 may prevent interaction with TNFRSF6 and MAP3K5 and block DAXX-mediated apoptosis. In contrast, in lymphoid cells JNC activation and TNFRSF6-mediated apoptosis may not involve DAXX. Shows restriction activity towards human cytomegalovirus (HCMV). Plays a role as a positive regulator of the heat shock transcription factor HSF1 activity during the stress protein response. The sequence is that of Death domain-associated protein 6 (DAXX) from Homo sapiens (Human).